Reading from the N-terminus, the 197-residue chain is UPF0725 protein At5g41640 (197 aa).

The protein belongs to the UPF0725 (EMB2204) family.

The sequence is that of UPF0725 protein At5g41640 from Arabidopsis thaliana (Mouse-ear cress).